We begin with the raw amino-acid sequence, 98 residues long: Integration host factor subunit alpha (98 aa).

The interval 49 to 70 (FGNFDLRDKNQRPGRNPKTGED) is disordered.

Belongs to the bacterial histone-like protein family. Heterodimer of an alpha and a beta chain.

Its function is as follows. This protein is one of the two subunits of integration host factor, a specific DNA-binding protein that functions in genetic recombination as well as in transcriptional and translational control. This Yersinia pestis protein is Integration host factor subunit alpha.